The primary structure comprises 274 residues: Halorhodopsin (274 aa).

Residues 1-21 (MSITSVPGVVDAGVLGAQSAA) constitute a propeptide that is removed on maturation. At 22–25 (AVRE) the chain is on the extracellular side. Residues 26–51 (NALLSSSLWVNVALAGIAILVFVYMG) form a helical membrane-spanning segment. The Cytoplasmic segment spans residues 52–57 (RTIRPG). Residues 58 to 81 (RPRLIWGATLMIPLVSISSYLGLL) traverse the membrane as a helical segment. The Extracellular segment spans residues 82–105 (SGLTVGMIEMPAGHALAGEMVRSQ). Glutamine 105, threonine 111, and serine 115 together coordinate chloride. The chain crosses the membrane as a helical span at residues 106–127 (WGRYLTWALSTPMILLALGLLA). The Cytoplasmic segment spans residues 128 to 130 (DVD). Residues 131-154 (LGSLFTVIAADIGMCVTGLAAAMT) traverse the membrane as a helical segment. Topologically, residues 155–157 (TSA) are extracellular. A helical transmembrane segment spans residues 158–180 (LLFRWAFYAISCAFFVVVLSALV). Residues 181–192 (TDWAASASSAGT) lie on the Cytoplasmic side of the membrane. The helical transmembrane segment at 193–216 (AEIFDTLRVLTVVLWLGYPIVWAV) threads the bilayer. Residues 217-226 (GVEGLALVQS) are Extracellular-facing. The helical transmembrane segment at 227 to 255 (VGVTSWAYSVLDVFAKYVFAFILLRWVAN) threads the bilayer. Lysine 242 carries the N6-(retinylidene)lysine modification. At 256 to 274 (NERTVAVAGQTLGTMSSDD) the chain is on the cytoplasmic side.

It belongs to the archaeal/bacterial/fungal opsin family. Homotrimer.

Its subcellular location is the cell membrane. Light-driven chloride pump. The chain is Halorhodopsin (hop) from Halobacterium salinarum (strain ATCC 29341 / DSM 671 / R1).